The following is an 800-amino-acid chain: DNA topoisomerase 4 subunit A (800 aa).

Residues 31–496 enclose the Topo IIA-type catalytic domain; it reads LPDVRDGLKP…ISEIKIDKEV (466 aa). Catalysis depends on Tyr-119, which acts as the O-(5'-phospho-DNA)-tyrosine intermediate.

It belongs to the type II topoisomerase GyrA/ParC subunit family. ParC type 2 subfamily. As to quaternary structure, heterotetramer composed of ParC and ParE.

It localises to the cell membrane. The enzyme catalyses ATP-dependent breakage, passage and rejoining of double-stranded DNA.. Topoisomerase IV is essential for chromosome segregation. It relaxes supercoiled DNA. Performs the decatenation events required during the replication of a circular DNA molecule. The chain is DNA topoisomerase 4 subunit A from Staphylococcus epidermidis (strain ATCC 12228 / FDA PCI 1200).